Reading from the N-terminus, the 389-residue chain is Probable tRNA sulfurtransferase (389 aa).

The THUMP domain occupies 57–165 (DEALDRLSKI…EDETYIYHRV (109 aa)). Residues 183 to 184 (LL), Lys267, Gly289, and Gln298 each bind ATP.

The protein belongs to the ThiI family.

Its subcellular location is the cytoplasm. The catalysed reaction is [ThiI sulfur-carrier protein]-S-sulfanyl-L-cysteine + a uridine in tRNA + 2 reduced [2Fe-2S]-[ferredoxin] + ATP + H(+) = [ThiI sulfur-carrier protein]-L-cysteine + a 4-thiouridine in tRNA + 2 oxidized [2Fe-2S]-[ferredoxin] + AMP + diphosphate. It catalyses the reaction [ThiS sulfur-carrier protein]-C-terminal Gly-Gly-AMP + S-sulfanyl-L-cysteinyl-[cysteine desulfurase] + AH2 = [ThiS sulfur-carrier protein]-C-terminal-Gly-aminoethanethioate + L-cysteinyl-[cysteine desulfurase] + A + AMP + 2 H(+). It participates in cofactor biosynthesis; thiamine diphosphate biosynthesis. Functionally, catalyzes the ATP-dependent transfer of a sulfur to tRNA to produce 4-thiouridine in position 8 of tRNAs, which functions as a near-UV photosensor. Also catalyzes the transfer of sulfur to the sulfur carrier protein ThiS, forming ThiS-thiocarboxylate. This is a step in the synthesis of thiazole, in the thiamine biosynthesis pathway. The sulfur is donated as persulfide by IscS. This chain is Probable tRNA sulfurtransferase, found in Methanothermobacter thermautotrophicus (strain ATCC 29096 / DSM 1053 / JCM 10044 / NBRC 100330 / Delta H) (Methanobacterium thermoautotrophicum).